The primary structure comprises 507 residues: TOM1-like protein 2 (507 aa).

The VHS domain maps to 20–152 (ATDGSLQSED…ELKRRGIEFP (133 aa)). Ser160 is modified (phosphoserine). Thr164 is modified (phosphothreonine). Positions 164-200 (TPQRSVPEMDPAATIPRSQTQPRTTAGTYSSPPPASY) are disordered. The GAT domain maps to 219–307 (EQIARLRSEL…VFLRYERFER (89 aa)). Positions 329–334 (NLIDLG) match the Clathrin-binding motif. Residues 466–507 (ERAKAAETVPDLPSPPTEAPAPASNTSTRKKPERSDDALFAL) are disordered. Residues 498 to 507 (ERSDDALFAL) show a composition bias toward basic and acidic residues.

This sequence belongs to the TOM1 family. As to quaternary structure, interacts with clathrin, SRC and TOLLIP. Interacts with MYO6. Ubiquitously expressed. Splicing pattern displays tissue specific variation.

Its function is as follows. Acts as a MYO6/Myosin VI adapter protein that targets myosin VI to endocytic structures. May also play a role in recruiting clathrin to endosomes. May regulate growth factor-induced mitogenic signaling. In Mus musculus (Mouse), this protein is TOM1-like protein 2 (Tom1l2).